The following is an 858-amino-acid chain: Leucine--tRNA ligase (858 aa).

The short motif at 43 to 54 (PYPSGDGLHVGH) is the 'HIGH' region element. The 'KMSKS' region signature appears at 629-633 (KMSKS). Position 632 (Lys632) interacts with ATP.

Belongs to the class-I aminoacyl-tRNA synthetase family.

The protein localises to the cytoplasm. The catalysed reaction is tRNA(Leu) + L-leucine + ATP = L-leucyl-tRNA(Leu) + AMP + diphosphate. In Treponema denticola (strain ATCC 35405 / DSM 14222 / CIP 103919 / JCM 8153 / KCTC 15104), this protein is Leucine--tRNA ligase.